Here is a 396-residue protein sequence, read N- to C-terminus: Probable protein phosphatase 2C 25 (396 aa).

The interval 32 to 98 (ESLSLTLSHR…SPPGGVLKRK (67 aa)) is disordered. The segment covering 44–61 (QTSSPSSPSTTVSSPKSP) has biased composition (low complexity). The PPM-type phosphatase domain maps to 139–392 (GYSVYCKRGR…DDISVMLIPL (254 aa)). Mn(2+)-binding residues include aspartate 175, glycine 176, aspartate 338, and aspartate 383.

It belongs to the PP2C family. In terms of assembly, interacts with MPK4 and MPK6. It depends on Mg(2+) as a cofactor. Requires Mn(2+) as cofactor.

Its subcellular location is the cytoplasm. It is found in the nucleus. The enzyme catalyses O-phospho-L-seryl-[protein] + H2O = L-seryl-[protein] + phosphate. It carries out the reaction O-phospho-L-threonyl-[protein] + H2O = L-threonyl-[protein] + phosphate. Its function is as follows. Protein phosphatase that negatively regulates defense respones. Inactivates MPK4 and MPK6 MAP kinases involved in stress and defense signaling. The chain is Probable protein phosphatase 2C 25 from Arabidopsis thaliana (Mouse-ear cress).